Consider the following 273-residue polypeptide: F-actin-capping protein subunit alpha (273 aa).

Belongs to the F-actin-capping protein alpha subunit family. As to quaternary structure, component of the F-actin capping complex, composed of a heterodimer of an alpha and a beta subunit.

Its subcellular location is the cytoplasm. The protein resides in the cytoskeleton. It is found in the actin patch. Its function is as follows. F-actin-capping proteins bind in a Ca(2+)-independent manner to the fast growing ends of actin filaments (barbed end) thereby blocking the exchange of subunits at these ends. Unlike other capping proteins (such as gelsolin and severin), these proteins do not sever actin filaments. This chain is F-actin-capping protein subunit alpha (cap1), found in Aspergillus oryzae (strain ATCC 42149 / RIB 40) (Yellow koji mold).